Reading from the N-terminus, the 310-residue chain is Nodulation protein D 1 (310 aa).

The HTH lysR-type domain maps to 6 to 63 (LDLNLLVALDALMTERQLTAAARRINLSQPAMSAAIARLRNYFHDDLFVMQGRELILT). The segment at residues 23–42 (LTAAARRINLSQPAMSAAIA) is a DNA-binding region (H-T-H motif).

The protein belongs to the LysR transcriptional regulatory family.

In terms of biological role, nodD regulates the expression of the nodABCFE genes which encode other nodulation proteins. NodD is also a negative regulator of its own expression. Binds flavonoids as inducers. This is Nodulation protein D 1 (nodD1) from Neorhizobium galegae (Rhizobium galegae).